A 179-amino-acid polypeptide reads, in one-letter code: Large ribosomal subunit protein uL5 (179 aa).

This sequence belongs to the universal ribosomal protein uL5 family. As to quaternary structure, part of the 50S ribosomal subunit; part of the 5S rRNA/L5/L18/L25 subcomplex. Contacts the 5S rRNA and the P site tRNA. Forms a bridge to the 30S subunit in the 70S ribosome.

Functionally, this is one of the proteins that bind and probably mediate the attachment of the 5S RNA into the large ribosomal subunit, where it forms part of the central protuberance. In the 70S ribosome it contacts protein S13 of the 30S subunit (bridge B1b), connecting the 2 subunits; this bridge is implicated in subunit movement. Contacts the P site tRNA; the 5S rRNA and some of its associated proteins might help stabilize positioning of ribosome-bound tRNAs. In Clostridium beijerinckii (strain ATCC 51743 / NCIMB 8052) (Clostridium acetobutylicum), this protein is Large ribosomal subunit protein uL5.